We begin with the raw amino-acid sequence, 114 residues long: Hydrogenase maturation factor HypA (114 aa).

His-2 is a Ni(2+) binding site. The Zn(2+) site is built by Cys-74, Cys-77, Cys-90, and Cys-93.

Belongs to the HypA/HybF family.

In terms of biological role, involved in the maturation of [NiFe] hydrogenases. Required for nickel insertion into the metal center of the hydrogenase. In Campylobacter jejuni subsp. jejuni serotype O:2 (strain ATCC 700819 / NCTC 11168), this protein is Hydrogenase maturation factor HypA.